The chain runs to 123 residues: Small ribosomal subunit protein uS12c (123 aa).

It belongs to the universal ribosomal protein uS12 family. As to quaternary structure, part of the 30S ribosomal subunit.

It is found in the plastid. The protein resides in the chloroplast. With S4 and S5 plays an important role in translational accuracy. Located at the interface of the 30S and 50S subunits. This is Small ribosomal subunit protein uS12c (rps12) from Chlorokybus atmophyticus (Soil alga).